The chain runs to 254 residues: 5'-nucleotidase SurE (254 aa).

A divalent metal cation contacts are provided by aspartate 8, aspartate 9, serine 39, and asparagine 91.

The protein belongs to the SurE nucleotidase family. Requires a divalent metal cation as cofactor.

The protein localises to the cytoplasm. The enzyme catalyses a ribonucleoside 5'-phosphate + H2O = a ribonucleoside + phosphate. Nucleotidase that shows phosphatase activity on nucleoside 5'-monophosphates. In Pseudoalteromonas translucida (strain TAC 125), this protein is 5'-nucleotidase SurE.